A 280-amino-acid polypeptide reads, in one-letter code: Protein MGF 505-3R (280 aa).

It belongs to the asfivirus MGF 505 family.

Its function is as follows. Plays a role in virus cell tropism, and may be required for efficient virus replication in macrophages. In African swine fever virus (strain Badajoz 1971 Vero-adapted) (Ba71V), this protein is Protein MGF 505-3R.